Here is a 90-residue protein sequence, read N- to C-terminus: Small ribosomal subunit protein uS19 (90 aa).

The protein belongs to the universal ribosomal protein uS19 family.

In terms of biological role, protein S19 forms a complex with S13 that binds strongly to the 16S ribosomal RNA. The polypeptide is Small ribosomal subunit protein uS19 (Methylococcus capsulatus (strain ATCC 33009 / NCIMB 11132 / Bath)).